The primary structure comprises 215 residues: Somatotropin (215 aa).

The first 25 residues, 1–25, serve as a signal peptide directing secretion; it reads MAPGARISLLLLITFTLLGPQRSGA. H44 contacts Zn(2+). C77 and C188 are disulfide-bonded. Position 130 is a phosphoserine (S130). Residue E197 participates in Zn(2+) binding. An intrachain disulfide couples C205 to C213.

The protein belongs to the somatotropin/prolactin family.

It is found in the secreted. Plays an important role in growth control. Its major role in stimulating body growth is to stimulate the liver and other tissues to secrete IGF1. It stimulates both the differentiation and proliferation of myoblasts. It also stimulates amino acid uptake and protein synthesis in muscle and other tissues. The protein is Somatotropin (GH1) of Trichosurus vulpecula (Brush-tailed possum).